The following is a 581-amino-acid chain: Interleukin-22 receptor subunit alpha-1 (581 aa).

Residues 1 to 15 (MKTLLTILTVGSLAA) form the signal peptide. Over 16–230 (HTTVDTSGLL…TLPDRTWAYS (215 aa)) the chain is Extracellular. Fibronectin type-III domains follow at residues 18–115 (TVDT…RFSS) and 141–221 (PTLT…RVKT). Cys-71 and Cys-79 form a disulfide bridge. N-linked (GlcNAc...) asparagine glycosylation is found at Asn-80 and Asn-172. A disulfide bridge links Cys-128 with Cys-217. A helical transmembrane segment spans residues 231 to 251 (FSGAVLFSMGFLVGLLCYLGY). Residues 252-581 (KYITKPPVPP…GLALTVQWES (330 aa)) are Cytoplasmic-facing. A disordered region spans residues 343–364 (QQTLSPPSYAPKAVPEVQPPSY). A phosphoserine; by GSK3-beta mark is found at Ser-410 and Ser-414. Lys-449 is covalently cross-linked (Glycyl lysine isopeptide (Lys-Gly) (interchain with G-Cter in ubiquitin)).

This sequence belongs to the type II cytokine receptor family. In terms of assembly, heterodimer with IL10RB and with IL20RB. Phosphorylated by GSK3-BETA and MAPK; phosphorylation by GSK3-BETA stabilizes IL22RA1 by preventing its proteasomal degradation. Expressed in kidney, liver and lung.

The protein resides in the cell membrane. Functionally, component of the receptor for IL20, IL22 and IL24. Component of IL22 receptor formed by IL22RA1 and IL10RB enabling IL22 signaling via JAK/STAT pathways. IL22 also induces activation of MAPK1/MAPK3 and Akt kinases pathways. Component of one of the receptor for IL20 and IL24 formed by IL22RA1 and IL20RB also signaling through STATs activation. Mediates IL24 antiangiogenic activity as well as IL24 inhibitory effect on endothelial cell tube formation and differentiation. This Mus musculus (Mouse) protein is Interleukin-22 receptor subunit alpha-1 (Il22ra1).